The following is a 158-amino-acid chain: Transcription elongation factor GreA (158 aa).

A coiled-coil region spans residues 8–74; sequence TKGGYNKLKD…TLERVLSTAT (67 aa).

The protein belongs to the GreA/GreB family.

Its function is as follows. Necessary for efficient RNA polymerase transcription elongation past template-encoded arresting sites. The arresting sites in DNA have the property of trapping a certain fraction of elongating RNA polymerases that pass through, resulting in locked ternary complexes. Cleavage of the nascent transcript by cleavage factors such as GreA or GreB allows the resumption of elongation from the new 3'terminus. GreA releases sequences of 2 to 3 nucleotides. In Chloroherpeton thalassium (strain ATCC 35110 / GB-78), this protein is Transcription elongation factor GreA.